A 702-amino-acid polypeptide reads, in one-letter code: Ribosomal RNA large subunit methyltransferase K/L (702 aa).

The THUMP domain maps to 43-154 (LIYQSLMWSR…KETASIALDL (112 aa)).

Belongs to the methyltransferase superfamily. RlmKL family.

It is found in the cytoplasm. The enzyme catalyses guanosine(2445) in 23S rRNA + S-adenosyl-L-methionine = N(2)-methylguanosine(2445) in 23S rRNA + S-adenosyl-L-homocysteine + H(+). It catalyses the reaction guanosine(2069) in 23S rRNA + S-adenosyl-L-methionine = N(2)-methylguanosine(2069) in 23S rRNA + S-adenosyl-L-homocysteine + H(+). Functionally, specifically methylates the guanine in position 2445 (m2G2445) and the guanine in position 2069 (m7G2069) of 23S rRNA. The protein is Ribosomal RNA large subunit methyltransferase K/L of Salmonella schwarzengrund (strain CVM19633).